We begin with the raw amino-acid sequence, 289 residues long: Probable endonuclease 4 (289 aa).

H74, H115, E150, D184, H187, H218, D231, H233, and E263 together coordinate Zn(2+).

This sequence belongs to the AP endonuclease 2 family. Requires Zn(2+) as cofactor.

The catalysed reaction is Endonucleolytic cleavage to 5'-phosphooligonucleotide end-products.. Its function is as follows. Endonuclease IV plays a role in DNA repair. It cleaves phosphodiester bonds at apurinic or apyrimidinic (AP) sites, generating a 3'-hydroxyl group and a 5'-terminal sugar phosphate. This chain is Probable endonuclease 4, found in Mycoplasma mycoides subsp. mycoides SC (strain CCUG 32753 / NCTC 10114 / PG1).